The following is a 211-amino-acid chain: Regulator of G-protein signaling 2 (211 aa).

Disordered regions lie at residues 14-33 (GPMDKGAGTGPKNEEKREKM) and 49-71 (LQNSSSPGKPKTGKKSKQQTFIK). Residues 32 to 66 (KMKRTLLKDWKSRLSYFLQNSSSPGKPKTGKKSKQ) form a necessary for membrane association region. Residues 79–116 (LWSEAFDELLASKYGLAAFRAFLKSEFCEENIEFWLAC) are necessary to inhibit protein synthesis. An RGS domain is found at 83–199 (AFDELLASKY…LESEFYQDLC (117 aa)).

As to quaternary structure, interacts with GNAQ. Does not interact with GNAI1 and GNAI3. Interacts with EIF2B5. Interacts with PRKG1 (isoform alpha). In terms of processing, phosphorylated by protein kinase C. Phosphorylation by PRKG1 leads to activation of RGS2 activity.

The protein resides in the cell membrane. It localises to the cytoplasm. The protein localises to the nucleus. Its subcellular location is the nucleolus. In terms of biological role, regulates G protein-coupled receptor signaling cascades. Inhibits signal transduction by increasing the GTPase activity of G protein alpha subunits, thereby driving them into their inactive GDP-bound form. It is involved in the negative regulation of the angiotensin-activated signaling pathway. Plays a role in the regulation of blood pressure in response to signaling via G protein-coupled receptors and GNAQ. Plays a role in regulating the constriction and relaxation of vascular smooth muscle. Binds EIF2B5 and blocks its activity, thereby inhibiting the translation of mRNA into protein. In Bos taurus (Bovine), this protein is Regulator of G-protein signaling 2 (RGS2).